A 427-amino-acid polypeptide reads, in one-letter code: Flotillin-1 (427 aa).

Phosphoserine occurs at positions 19, 163, and 385. At Thr387 the chain carries Phosphothreonine.

It belongs to the band 7/mec-2 family. Flotillin subfamily. In terms of assembly, heterooligomeric complex of flotillin-1 and flotillin-2 and caveolin-1 and caveolin-2. Interacts with ECPAS.

It localises to the cell membrane. It is found in the endosome. The protein resides in the membrane. The protein localises to the caveola. Its subcellular location is the melanosome. It localises to the membrane raft. In terms of biological role, may act as a scaffolding protein within caveolar membranes, functionally participating in formation of caveolae or caveolae-like vesicles. The polypeptide is Flotillin-1 (FLOT1) (Homo sapiens (Human)).